The sequence spans 1469 residues: ABC transporter G family member 36 (1469 aa).

The residue at position 1 (methionine 1) is an N-acetylmethionine. A phosphoserine mark is found at serine 37, serine 38, and serine 40. Threonine 43 carries the post-translational modification Phosphothreonine. Position 45 is a phosphoserine (serine 45). Residues 171–444 enclose the ABC transporter 1 domain; the sequence is LGMIGIQFAK…FESFGFKCPE (274 aa). 204–211 is an ATP binding site; the sequence is GPPSSGKT. Residues 522 to 735 enclose the ABC transmembrane type-2 1 domain; sequence ELLKSCWDKE…AFNGLVVNEM (214 aa). 7 consecutive transmembrane segments (helical) span residues 540–560, 575–595, 621–641, 659–679, 685–705, 713–733, and 772–792; these read FFYV…STLF, LYIG…FAEM, LPTF…WMVV, FLLV…IASV, IANT…GFLL, WWGW…LVVN, and ISVG…TLAL. The interval 806-852 is disordered; it reads PEEENEDADQGKDPMRRSLSTADGNRRGEVAMGRMSRDSAAEASGGA. Phosphoserine occurs at positions 825, 841, and 844. Positions 829 to 845 are enriched in basic and acidic residues; sequence GNRRGEVAMGRMSRDSA. Residues 867 to 1119 enclose the ABC transporter 2 domain; sequence MSFDDVKYFV…KVVEYFESFP (253 aa). 912-919 lines the ATP pocket; the sequence is GVSGAGKT. Residues 1192-1406 enclose the ABC transmembrane type-2 2 domain; the sequence is GQFKSCLWKQ…TVYGLIVSQY (215 aa). 7 helical membrane-spanning segments follow: residues 1216–1236, 1239–1259, 1299–1319, 1326–1346, 1356–1376, 1384–1404, and 1441–1461; these read FIFT…IGGN, NAGD…FVGI, LPYV…MVGF, FFWF…YGMM, VASI…GFFI, WWIW…LIVS, and PVAA…AFCI.

This sequence belongs to the ABC transporter superfamily. ABCG family. PDR (TC 3.A.1.205) subfamily. In terms of assembly, interacts, in a Ca(2+)-dependent manner, with calmodulins CaM3, CaM7 and several CaM-like proteins (CML8, CML9, CML12/CAL4, CML37 and CML38), as well as with calcium regulated proteins CBL4/SOS3 and KIC. In terms of processing, phosphorylated upon perception of pathogen-associated molecular patterns (PAMPs); phosphorylations at Ser-40 and Ser-45, which likely regulate transport activity, are required for plant defense against pathogens (e.g. Blumeria graminis), but dispensable for recruitment to the host-pathogen interface and penetration sites. Phosphorylation at Ser-841 seems to be required for protein stability. Ubiquitous (at protein level). Higher levels in root hairs, stomata, epidermal cells, and hydathodes. Concentrated at the infection site of infected plants, including papillae and haustoria. Accumulates at the periphery of lateral root cap and root epidermal cells, especially in the outer lateral membrane domain facing the environment.

Its subcellular location is the cell membrane. It is found in the golgi apparatus. The protein localises to the trans-Golgi network membrane. The protein resides in the endoplasmic reticulum membrane. Together with ABCG37, regulates auxin homeostasis and responses by playing a dual role in coumarin (e.g. esculin) and in the auxin precursor indole 3-butyric acid (IBA) efflux transport, thus influencing cotyledons, roots and root hairs development. Mediates the transport (export into the apoplast) of distinct indole-type metabolites in distinct biological processes; a precursor of 4-O-beta-D-glucosyl-indol-3-yl formamide (4OGlcI3F), a pathogen-inducible tryptophan-derived compound (e.g. upon Blumeria graminis conidiospore inoculation), being a probable substrate in extracellular pathogen defense. Involved in the cellular detoxification of xenobiotics by promoting the excretion of some auxinic herbicides including 4-(2,4-dichlorophenoxy)butyric acid (2,4-DB) and other members of the phenoxyalkanoic acid family but not 2,4-dichlorophenoxyacetic acid (2,4-D). Mediates thymidine exudation in the rhizosphere. May be a transporter of lignin precursors during tracheary element differentiation. Key factor that controls the extent of cell death in the defense response. Necessary for both callose deposition and glucosinolate activation in response to pathogens. As a central component of nonhost resistance (NHR), required for limiting invasion by nonadapted pathogens including powdery mildews (e.g. Blumeria graminis and Erysiphe pisi), root-penetrating pathogenic fungi (e.g. Fusarium oxysporum), Phakopsora pachyrhizi and Colletotrichum gloeosporioides (anthracnose fungi), probably by sensing Ca(2+) via interactions with calmodulins (e.g. CaM7). Confers resistance to cadmium (Cd) and lead (Pb), probably as an efflux pump of Cd2+ or Cd conjugates, and possibly, of chemicals that mediate pathogen resistance. Promotes resistance to abiotic stresses (e.g. drought and salt stress) and favors general growth by preventing sodium accumulation in plants. Required for microbe-associated molecular patterns (MAMPs)- and salicylic acid (SA)-dependent hypersensitive cell death (HR), involving indole glucosinolate breakdown products (e.g. indole-3-acetonitrile), probably in a PEN2 myrosinase-dependent metabolic pathway, triggered by the recognition of effectors from incompatible pathogens including oomycetes and bacteria (e.g. AvrRpm1 and AvrRps4) and benzothiadiazole- (BTH), and leading to an induced protection against pathogens (e.g. Pseudomonas syringae pv. tomato DC3000, Golovinomyces orontii and Hyaloperonospora arabidopsidis). This is ABC transporter G family member 36 from Arabidopsis thaliana (Mouse-ear cress).